We begin with the raw amino-acid sequence, 313 residues long: Pyrimidine-specific ribonucleoside hydrolase RihB (313 aa).

The active-site Proton acceptor is Asp11. Ca(2+)-binding residues include Asp11, Asp16, and Val124. The substrate site is built by Gln227 and His239. Asp240 lines the Ca(2+) pocket.

This sequence belongs to the IUNH family. RihB subfamily. In terms of assembly, homotetramer. It depends on Ca(2+) as a cofactor.

The enzyme catalyses a pyrimidine ribonucleoside + H2O = a pyrimidine nucleobase + D-ribose. Functionally, hydrolyzes cytidine or uridine to ribose and cytosine or uracil, respectively. Has a clear preference for cytidine over uridine. Strictly specific for ribonucleosides. The polypeptide is Pyrimidine-specific ribonucleoside hydrolase RihB (Escherichia coli O1:K1 / APEC).